Consider the following 203-residue polypeptide: Outer-membrane lipoprotein LolB (203 aa).

A signal peptide spans 1 to 17; that stretch reads MNRLFRLLPLASLVLTA. Cys18 carries the N-palmitoyl cysteine lipid modification. Residue Cys18 is the site of S-diacylglycerol cysteine attachment.

Belongs to the LolB family. In terms of assembly, monomer.

Its subcellular location is the cell outer membrane. Plays a critical role in the incorporation of lipoproteins in the outer membrane after they are released by the LolA protein. The sequence is that of Outer-membrane lipoprotein LolB from Klebsiella pneumoniae (strain 342).